We begin with the raw amino-acid sequence, 192 residues long: Nucleosome assembly protein 1-like 5 (192 aa).

Residues 1–12 are compositionally biased toward polar residues; it reads MADSQNQGSAEP. Residues 1 to 76 form a disordered region; it reads MADSQNQGSA…APKPRNDFIE (76 aa). Composition is skewed to low complexity over residues 15 to 28 and 40 to 55; these read AAAAAAAADAAAAA and GDSDSASSDSDGVVGQ. The stretch at 86 to 112 forms a coiled coil; sequence VLALKKLQKRCDKIEAKFDKEFQALEK. The disordered stretch occupies residues 136–192; it reads AWTLEGDEEDDDDDEYEDEEEGEEEDEEEEEPAAEAAGTAAAKDEGPHSAVPDDAKK. The segment covering 140–168 has biased composition (acidic residues); the sequence is EGDEEDDDDDEYEDEEEGEEEDEEEEEPA. Basic and acidic residues predominate over residues 177-192; the sequence is AKDEGPHSAVPDDAKK.

The protein belongs to the nucleosome assembly protein (NAP) family.

The protein localises to the nucleus. This Bos taurus (Bovine) protein is Nucleosome assembly protein 1-like 5 (NAP1L5).